The sequence spans 346 residues: Glycerol-1-phosphate dehydrogenase [NAD(P)+] (346 aa).

NAD(+) is bound by residues 93–97 (GSIID) and 115–118 (TTAS). Asp-120 serves as a coordination point for substrate. NAD(+) is bound at residue Ser-124. Asp-167 is a binding site for substrate. The Zn(2+) site is built by Asp-167 and His-247. His-251 is a binding site for substrate. His-263 lines the Zn(2+) pocket.

The protein belongs to the glycerol-1-phosphate dehydrogenase family. Zn(2+) is required as a cofactor.

It localises to the cytoplasm. It catalyses the reaction sn-glycerol 1-phosphate + NAD(+) = dihydroxyacetone phosphate + NADH + H(+). It carries out the reaction sn-glycerol 1-phosphate + NADP(+) = dihydroxyacetone phosphate + NADPH + H(+). It functions in the pathway membrane lipid metabolism; glycerophospholipid metabolism. Functionally, catalyzes the NAD(P)H-dependent reduction of dihydroxyacetonephosphate (DHAP or glycerone phosphate) to glycerol 1-phosphate (G1P). The G1P thus generated is used as the glycerophosphate backbone of phospholipids in the cellular membranes of Archaea. This Pyrococcus horikoshii (strain ATCC 700860 / DSM 12428 / JCM 9974 / NBRC 100139 / OT-3) protein is Glycerol-1-phosphate dehydrogenase [NAD(P)+].